Consider the following 182-residue polypeptide: UPF0149 protein HI_0817 (182 aa).

This sequence belongs to the UPF0149 family.

This Haemophilus influenzae (strain ATCC 51907 / DSM 11121 / KW20 / Rd) protein is UPF0149 protein HI_0817.